The sequence spans 159 residues: ATP synthase subunit b' (159 aa).

A helical membrane pass occupies residues 27-47 (ATLPLMAVQFLILTVILNALL).

Belongs to the ATPase B chain family. In terms of assembly, F-type ATPases have 2 components, F(1) - the catalytic core - and F(0) - the membrane proton channel. F(1) has five subunits: alpha(3), beta(3), gamma(1), delta(1), epsilon(1). F(0) has four main subunits: a(1), b(1), b'(1) and c(10-14). The alpha and beta chains form an alternating ring which encloses part of the gamma chain. F(1) is attached to F(0) by a central stalk formed by the gamma and epsilon chains, while a peripheral stalk is formed by the delta, b and b' chains.

It is found in the cellular thylakoid membrane. Its function is as follows. F(1)F(0) ATP synthase produces ATP from ADP in the presence of a proton or sodium gradient. F-type ATPases consist of two structural domains, F(1) containing the extramembraneous catalytic core and F(0) containing the membrane proton channel, linked together by a central stalk and a peripheral stalk. During catalysis, ATP synthesis in the catalytic domain of F(1) is coupled via a rotary mechanism of the central stalk subunits to proton translocation. Component of the F(0) channel, it forms part of the peripheral stalk, linking F(1) to F(0). The b'-subunit is a diverged and duplicated form of b found in plants and photosynthetic bacteria. The polypeptide is ATP synthase subunit b' (Synechococcus sp. (strain PCC 6716)).